Reading from the N-terminus, the 388-residue chain is Mitochondrial distribution and morphology protein 12 (388 aa).

The 388-residue stretch at 1–388 (MSLDINWSLL…VFPNFHTVAL (388 aa)) folds into the SMP-LTD domain. 2 disordered regions span residues 75-101 (DDEG…RNEA) and 209-249 (PMSI…KVSS). Residues 83–101 (EEKQREKEREERDKLRNEA) show a composition bias toward basic and acidic residues. Pro residues predominate over residues 234–243 (PSPPAHPAGL).

This sequence belongs to the MDM12 family. As to quaternary structure, component of the ER-mitochondria encounter structure (ERMES) or MDM complex, composed of MMM1, MDM10, MDM12 and MDM34. An MMM1 homodimer associates with one molecule of MDM12 on each side in a pairwise head-to-tail manner, and the SMP-LTD domains of MMM1 and MDM12 generate a continuous hydrophobic tunnel for phospholipid trafficking.

It localises to the mitochondrion outer membrane. Its subcellular location is the endoplasmic reticulum membrane. Component of the ERMES/MDM complex, which serves as a molecular tether to connect the endoplasmic reticulum (ER) and mitochondria. Components of this complex are involved in the control of mitochondrial shape and protein biogenesis, and function in nonvesicular lipid trafficking between the ER and mitochondria. MDM12 is required for the interaction of the ER-resident membrane protein MMM1 and the outer mitochondrial membrane-resident beta-barrel protein MDM10. The MDM12-MMM1 subcomplex functions in the major beta-barrel assembly pathway that is responsible for biogenesis of all mitochondrial outer membrane beta-barrel proteins, and acts in a late step after the SAM complex. The MDM10-MDM12-MMM1 subcomplex further acts in the TOM40-specific pathway after the action of the MDM12-MMM1 complex. Essential for establishing and maintaining the structure of mitochondria and maintenance of mtDNA nucleoids. The protein is Mitochondrial distribution and morphology protein 12 of Cryptococcus neoformans var. neoformans serotype D (strain JEC21 / ATCC MYA-565) (Filobasidiella neoformans).